The primary structure comprises 1022 residues: Sodium/potassium-transporting ATPase subunit alpha (1022 aa).

Positions 1–5 (MGKGA) are excised as a propeptide. The tract at residues 1 to 34 (MGKGAASEKYQPAATSENAKNSKKSKSKTTDLDE) is disordered. At 6–87 (ASEKYQPAAT…NALTPPPTTP (82 aa)) the chain is on the cytoplasmic side. Ser16 carries the post-translational modification Phosphoserine; by PKC. The segment at 82–84 (PPP) is interaction with phosphoinositide-3 kinase. The helical transmembrane segment at 88 to 108 (EWIKFCRQLFGGFSILLWTGA) threads the bilayer. Residues 109–131 (ILCFLAYGIQVATVDNPANDNLY) lie on the Lumenal side of the membrane. A helical transmembrane segment spans residues 132–152 (LGVVLSTVVIITGCFSYYQEA). Residues 153–288 (KSSKIMDSFK…VGQTPIAAEI (136 aa)) lie on the Cytoplasmic side of the membrane. The segment at 215–235 (NSSLTGESEPQSRSPEYSSEN) is disordered. The chain crosses the membrane as a helical span at residues 289 to 308 (EHFIHIITGVAVFLGVSFFI). Residues 309 to 320 (LSLILGYTWLEA) lie on the Lumenal side of the membrane. A helical transmembrane segment spans residues 321 to 338 (VIFLIGIIVANVPEGLLA). The Cytoplasmic segment spans residues 339–771 (TVTVCLTLTA…EEGRLIFDNL (433 aa)). Asp376 (4-aspartylphosphate intermediate) is an active-site residue. Mg(2+) contacts are provided by Asp716 and Asp720. The chain crosses the membrane as a helical span at residues 772-791 (KKSIAYTLTSNIPEITPFLV). Residues 792–801 (FIIANVPLPL) lie on the Lumenal side of the membrane. The chain crosses the membrane as a helical span at residues 802–822 (GTVTILCIDLGTDMVPAISLA). Residues 823–842 (YERAESDIMKRQPRNPKTDK) are Cytoplasmic-facing. A helical transmembrane segment spans residues 843–865 (LVNERLISMAYGQIGMIQALGGF). At 866–917 (FSYFVILAENGFLPIDLIGIREKWDELWTQDLEDSYGQQWTYEQRKIVEYTC) the chain is on the lumenal side. The chain crosses the membrane as a helical span at residues 918–937 (HTSFFVSIVIVQWADLIICK). The Cytoplasmic segment spans residues 938–950 (TRRNSIFQQGMKN). Ser942 carries the post-translational modification Phosphoserine; by PKA. The chain crosses the membrane as a helical span at residues 951 to 969 (KILIFGLFEETALAAFLSY). At 970-984 (TPGTDIALRMYPLKP) the chain is on the lumenal side. A helical transmembrane segment spans residues 985-1005 (SWWFCAFPYSLIIFLYDEARR). Topologically, residues 1006-1022 (FILRRNPGGWVEQETYY) are cytoplasmic.

It belongs to the cation transport ATPase (P-type) (TC 3.A.3) family. Type IIC subfamily. The sodium/potassium-transporting ATPase is composed of a catalytic alpha subunit, an auxiliary non-catalytic beta subunit and an additional regulatory subunit.

It is found in the cell membrane. The catalysed reaction is K(+)(out) + Na(+)(in) + ATP + H2O = K(+)(in) + Na(+)(out) + ADP + phosphate + H(+). Functionally, this is the catalytic component of the active enzyme, which catalyzes the hydrolysis of ATP coupled with the exchange of sodium and potassium ions across the plasma membrane. This action creates the electrochemical gradient of sodium and potassium ions, providing the energy for active transport of various nutrients. This chain is Sodium/potassium-transporting ATPase subunit alpha, found in Tetronarce californica (Pacific electric ray).